Reading from the N-terminus, the 456-residue chain is Acid sphingomyelinase-like phosphodiesterase 3b (456 aa).

Residues 1-18 (MTLLGWLIFLAPWGVAGA) form the signal peptide. The Zn(2+) site is built by D28 and H30. A glycan (N-linked (GlcNAc...) asparagine) is linked at N34. C45 and C64 are oxidised to a cystine. A glycan (N-linked (GlcNAc...) asparagine) is linked at N72. D93 contacts Zn(2+). N100 carries N-linked (GlcNAc...) asparagine glycosylation. A Zn(2+)-binding site is contributed by N134. N-linked (GlcNAc...) asparagine glycans are attached at residues N164 and N223. 3 residues coordinate Zn(2+): H236, H277, and H279. Intrachain disulfides connect C405-C409 and C415-C428.

It belongs to the acid sphingomyelinase family. Interacts with TLR4, TLR7, TLR8 and TLR9. It depends on Zn(2+) as a cofactor. In terms of processing, N-glycosylated. As to expression, macrophages and dendritic cells.

The protein resides in the secreted. It is found in the cell membrane. Functionally, lipid-modulating phosphodiesterase. Active on the surface of macrophages and dendritic cells and strongly influences macrophage lipid composition and membrane fluidity. Acts as a negative regulator of Toll-like receptor signaling. Has in vitro phosphodiesterase activity, but the physiological substrate is unknown. Lacks activity with phosphocholine-containing lipids, but can cleave CDP-choline, and can release phosphate from ATP and ADP (in vitro). The chain is Acid sphingomyelinase-like phosphodiesterase 3b (Smpdl3b) from Mus musculus (Mouse).